Consider the following 288-residue polypeptide: MSALRALLGLGLLAAGSRLRRVPGRAGACPAGSAWWEARRPHSGGGGEPAGMASPAVKYLSQEEAQAVDEELFNEYQFSVDQLMELAGLSCATAIAKAYPPTSMSRSPPAVLVICGPGNNGGDGLVCARHLKLFGYQPTIYYPKRPNKPLFTALVTQCQKMDIPFLGEMPPEPMLIDELYELVVDAIFGFSFKGDVREPFRTILSVLDGLTVPIASIDIPSGWDVEKGNSGGIQPDLLISLTAPKKSATQFTGRYHYLGGRFVPPALEKKYQLNLPPYPDTECVYRLQ.

The N-terminal 48 residues, 1 to 48 (MSALRALLGLGLLAAGSRLRRVPGRAGACPAGSAWWEARRPHSGGGGE), are a transit peptide targeting the mitochondrion. The region spanning 65 to 275 (AQAVDEELFN…ALEKKYQLNL (211 aa)) is the YjeF N-terminal domain. 119–123 (NNGGD) serves as a coordination point for (6S)-NADPHX. Asn-120 contacts K(+). N6-succinyllysine is present on Lys-144. A K(+)-binding site is contributed by Asp-185. (6S)-NADPHX-binding positions include 189 to 195 (GFSFKGD) and Asp-218. Ser-221 contacts K(+).

It belongs to the NnrE/AIBP family. In terms of assembly, homodimer. Interacts with APOA1 and APOA2. K(+) serves as cofactor. In terms of processing, undergoes physiological phosphorylation during sperm capacitation, downstream to PKA activation.

The protein localises to the mitochondrion. Its subcellular location is the secreted. The catalysed reaction is (6R)-NADHX = (6S)-NADHX. It catalyses the reaction (6R)-NADPHX = (6S)-NADPHX. Functionally, catalyzes the epimerization of the S- and R-forms of NAD(P)HX, a damaged form of NAD(P)H that is a result of enzymatic or heat-dependent hydration. This is a prerequisite for the S-specific NAD(P)H-hydrate dehydratase to allow the repair of both epimers of NAD(P)HX. Accelerates cholesterol efflux from endothelial cells to high-density lipoprotein (HDL) and thereby regulates angiogenesis. The sequence is that of NAD(P)H-hydrate epimerase from Canis lupus familiaris (Dog).